Here is a 1015-residue protein sequence, read N- to C-terminus: Transposase for transposon Tn3 (1015 aa).

It belongs to the transposase 7 family.

In terms of biological role, required for transposition of transposon Tn3. This Escherichia coli protein is Transposase for transposon Tn3 (tnpA).